The primary structure comprises 124 residues: Ubiquinol-cytochrome-c reductase complex assembly factor 2 (124 aa).

A mitochondrion-targeting transit peptide spans 1–13 (MASLRYRRFLKLC).

It localises to the mitochondrion matrix. It is found in the mitochondrion nucleoid. The protein localises to the mitochondrion. Functionally, required for the assembly of the ubiquinol-cytochrome c reductase complex (mitochondrial respiratory chain complex III or cytochrome b-c1 complex). May play a role in the modulation of respiratory chain activities such as oxygen consumption and ATP production. May be involved in cytochrome b translation and/or stability. This Xenopus tropicalis (Western clawed frog) protein is Ubiquinol-cytochrome-c reductase complex assembly factor 2 (uqcc2).